The following is a 118-amino-acid chain: Large ribosomal subunit protein uL22 (118 aa).

Belongs to the universal ribosomal protein uL22 family. Part of the 50S ribosomal subunit.

This protein binds specifically to 23S rRNA; its binding is stimulated by other ribosomal proteins, e.g. L4, L17, and L20. It is important during the early stages of 50S assembly. It makes multiple contacts with different domains of the 23S rRNA in the assembled 50S subunit and ribosome. Functionally, the globular domain of the protein is located near the polypeptide exit tunnel on the outside of the subunit, while an extended beta-hairpin is found that lines the wall of the exit tunnel in the center of the 70S ribosome. In Leuconostoc citreum (strain KM20), this protein is Large ribosomal subunit protein uL22.